The following is a 171-amino-acid chain: Secreted LysM effector Blys4 (171 aa).

A LysM domain is found at 125 to 169; it reads KPYTIHQGDTCWDIAESHSVGVDDILTLNPELDCDKLSIGSQICL.

This sequence belongs to the secreted LysM effector family.

Functionally, might have a role in sequestration of chitin oligosaccharides (breakdown products of fungal cell walls that are released during invasion and act as triggers of host immunity) to dampen host defense. The protein is Secreted LysM effector Blys4 of Beauveria bassiana (strain ARSEF 2860) (White muscardine disease fungus).